The following is a 427-amino-acid chain: Glutamate-1-semialdehyde 2,1-aminomutase (427 aa).

At Lys264 the chain carries N6-(pyridoxal phosphate)lysine.

This sequence belongs to the class-III pyridoxal-phosphate-dependent aminotransferase family. HemL subfamily. In terms of assembly, homodimer. The cofactor is pyridoxal 5'-phosphate.

Its subcellular location is the cytoplasm. It catalyses the reaction (S)-4-amino-5-oxopentanoate = 5-aminolevulinate. The protein operates within porphyrin-containing compound metabolism; protoporphyrin-IX biosynthesis; 5-aminolevulinate from L-glutamyl-tRNA(Glu): step 2/2. The polypeptide is Glutamate-1-semialdehyde 2,1-aminomutase (Clostridium botulinum (strain Alaska E43 / Type E3)).